A 291-amino-acid chain; its full sequence is ATP synthase subunit a (291 aa).

The next 7 membrane-spanning stretches (helical) occupy residues 50 to 70 (LDSM…FWIV), 108 to 128 (IAPL…MDLI), 129 to 149 (PVDW…GMDP), 161 to 181 (DPNI…FYSI), 203 to 223 (PVAK…TFLA), 241 to 261 (LIFI…SVPW), and 262 to 282 (AIFH…LTIV).

The protein belongs to the ATPase A chain family. In terms of assembly, F-type ATPases have 2 components, CF(1) - the catalytic core - and CF(0) - the membrane proton channel. CF(1) has five subunits: alpha(3), beta(3), gamma(1), delta(1), epsilon(1). CF(0) has three main subunits: a(1), b(2) and c(9-12). The alpha and beta chains form an alternating ring which encloses part of the gamma chain. CF(1) is attached to CF(0) by a central stalk formed by the gamma and epsilon chains, while a peripheral stalk is formed by the delta and b chains.

It is found in the cell inner membrane. In terms of biological role, key component of the proton channel; it plays a direct role in the translocation of protons across the membrane. The protein is ATP synthase subunit a of Acinetobacter baumannii (strain AB307-0294).